Reading from the N-terminus, the 152-residue chain is UPF0178 protein KPK_4355 (152 aa).

It belongs to the UPF0178 family.

The chain is UPF0178 protein KPK_4355 from Klebsiella pneumoniae (strain 342).